Reading from the N-terminus, the 1290-residue chain is Alpha-factor-transporting ATPase (1290 aa).

At 1–25 (MNFLSFKTTKHYHIFRYVNIRNDYR) the chain is on the cytoplasmic side. Residues 26–46 (LLMIMIIGTVATGLVPAITSI) form a helical membrane-spanning segment. Residues 27 to 319 (LMIMIIGTVA…TLHQIVVLQK (293 aa)) enclose the ABC transmembrane type-1 1 domain. Residues 47–75 (LTGRVFDLLSVFVANGSHQGLYSQLVQRS) are Extracellular-facing. A glycan (N-linked (GlcNAc...) asparagine) is linked at Asn-61. The helical transmembrane segment at 76 to 96 (MAVMALGAASVPVMWLSLTSW) threads the bilayer. Topologically, residues 97 to 150 (MHIGERQGFRIRSQILEAYLEEKPMEWYDNNEKLLGDFTQINRCVEELRSSSAE) are cytoplasmic. The helical transmembrane segment at 151–171 (ASAITFQNLVAICALLGTSFY) threads the bilayer. The Extracellular portion of the chain corresponds to 172-173 (YS). A helical transmembrane segment spans residues 174-194 (WSLTLIILCSSPIITFFAVVF). Over 195–262 (SRMIHVYSEK…SCFFVAANAG (68 aa)) the chain is Cytoplasmic. Residues 263–283 (ILRFLTLTMFVQGFWFGSAMI) traverse the membrane as a helical segment. Topologically, residues 284-296 (KKGKLNINDVITC) are extracellular. A helical transmembrane segment spans residues 297–317 (FHSCIMLGSTLNNTLHQIVVL). Topologically, residues 318–715 (QKGGVAMEKI…RMIKSIRYKK (398 aa)) are cytoplasmic. The 247-residue stretch at 357 to 603 (LTFANVSFSY…PTTTFSTWYH (247 aa)) folds into the ABC transporter 1 domain. 392-399 (GKSGSGKS) is a binding site for ATP. The helical transmembrane segment at 716–736 (ILILGLLCSLIAGATNPVFSY) threads the bilayer. In terms of domain architecture, ABC transmembrane type-1 2 spans 717-1007 (LILGLLCSLI…LVSQIPDISR (291 aa)). Residues 737 to 763 (TFSFLLEGIVPSTDGKTGSSHYLAKWS) are Extracellular-facing. A helical transmembrane segment spans residues 764-784 (LLVLGVAAADGIFNFAKGFLL). The Cytoplasmic segment spans residues 785-838 (DCCSEYWVMDLRNEVMEKLTRKNMDWFSGENNKASEISALVLNDLRDLRSLVSE). Residues 839 to 859 (FLSAMTSFVTVSTIGLIWALV) form a helical membrane-spanning segment. Topologically, residues 860–865 (SGWKLS) are extracellular. Residues 866-886 (LVCISMFPLIIIFSAIYGGIL) form a helical membrane-spanning segment. Residues 887–945 (QKCETDYKTSVAQLENCLYQIVTNIKTIKCLQAEFHFQLTYHDLKIKMQQIASKRAIAT) are Cytoplasmic-facing. A helical transmembrane segment spans residues 946-966 (GFGISMTNMIVMCIQAIIYYY). Residues 967–981 (GLKLVMIHEYTSKEM) are Extracellular-facing. Residues 982-1002 (FTTFTLLLFTIMSCTSLVSQI) traverse the membrane as a helical segment. Residues 1003–1290 (PDISRGQRAA…LFQIVSNQSS (288 aa)) lie on the Cytoplasmic side of the membrane. A Glycyl lysine isopeptide (Lys-Gly) (interchain with G-Cter in ubiquitin) cross-link involves residue Lys-1022. The region spanning 1052–1287 (VSIQNLTFAY…RGELFQIVSN (236 aa)) is the ABC transporter 2 domain. Residue 1087-1094 (GESGTGKS) participates in ATP binding.

Belongs to the ABC transporter superfamily. Alpha-factor sex pheromone exporter (TC 3.A.1.206) family. Degraded via the ubiquitin system.

It is found in the membrane. The enzyme catalyses an [alpha-factor](in) + ATP + H2O = an [alpha-factor](out) + ADP + phosphate + H(+). Functionally, STE6 is required in yeast MATA cells for production of A-factor pheromone. STE6 is involved in the transport of the farnesyl-derivation of the A-factor pheromone. In Saccharomyces cerevisiae (strain ATCC 204508 / S288c) (Baker's yeast), this protein is Alpha-factor-transporting ATPase (STE6).